The following is a 677-amino-acid chain: Methionine--tRNA ligase (677 aa).

The 'HIGH' region signature appears at 15–25 (PYANGSIHLGH). Zn(2+) contacts are provided by C146, C149, C159, and C162. The 'KMSKS' region motif lies at 333-337 (KMSKS). K336 is a binding site for ATP. The 103-residue stretch at 575–677 (DFAKVDLRVA…AGAKPGHQVK (103 aa)) folds into the tRNA-binding domain.

It belongs to the class-I aminoacyl-tRNA synthetase family. MetG type 1 subfamily. As to quaternary structure, homodimer. Zn(2+) is required as a cofactor.

Its subcellular location is the cytoplasm. The catalysed reaction is tRNA(Met) + L-methionine + ATP = L-methionyl-tRNA(Met) + AMP + diphosphate. Its function is as follows. Is required not only for elongation of protein synthesis but also for the initiation of all mRNA translation through initiator tRNA(fMet) aminoacylation. The sequence is that of Methionine--tRNA ligase from Shigella dysenteriae serotype 1 (strain Sd197).